Reading from the N-terminus, the 329-residue chain is MACIIHTNRHNDTVLSKLQKDLSKSIEIGNKKYGGGQLKTVYVYQLDESVESRPCNIPFFYGLRLAKTNADVRIERPERKELATMGKRFVGTLRDEQTVSRNQALTLLTQHKSCILSCYTGFGKTVTAINMASKIKLPTLIAVPKKPLLAQWEQEIAKFIPTATVVVVDPSKIKSLPPQPECDFCIINTCNLEKLVKHDPKFVKTFGFLIVDEAHLQMTETMAENLLHVTPRYLLGITATPYRDDGYHVLFDMFFGPEMVKIKLNKKHTVYKVKTGFCPDESRYKKKKTLFHLPSRKSIGTPYWRSRPPIRKGTGSSWTLLRASRRAPF.

The region spanning 105-259 is the Helicase ATP-binding domain; it reads LTLLTQHKSC…LFDMFFGPEM (155 aa). 118–125 contacts ATP; that stretch reads CYTGFGKT. The DEAH box motif lies at 212–215; it reads DEAH.

It belongs to the DEAD box helicase family. DEAH subfamily.

This Invertebrate iridescent virus 3 (IIV-3) protein is Putative helicase 109L.